Consider the following 332-residue polypeptide: Glycerol-3-phosphate dehydrogenase [NAD(P)+] (332 aa).

The NADPH site is built by Ser11, Phe12, Lys32, and Lys106. Sn-glycerol 3-phosphate is bound by residues Lys106, Gly137, and Ser139. Position 141 (Ala141) interacts with NADPH. Sn-glycerol 3-phosphate contacts are provided by Lys192, Asp245, Ser255, Arg256, and Asn257. The Proton acceptor role is filled by Lys192. Residue Arg256 coordinates NADPH. Positions 280 and 282 each coordinate NADPH.

The protein belongs to the NAD-dependent glycerol-3-phosphate dehydrogenase family.

It localises to the cytoplasm. It carries out the reaction sn-glycerol 3-phosphate + NAD(+) = dihydroxyacetone phosphate + NADH + H(+). The enzyme catalyses sn-glycerol 3-phosphate + NADP(+) = dihydroxyacetone phosphate + NADPH + H(+). It participates in membrane lipid metabolism; glycerophospholipid metabolism. Catalyzes the reduction of the glycolytic intermediate dihydroxyacetone phosphate (DHAP) to sn-glycerol 3-phosphate (G3P), the key precursor for phospholipid synthesis. The polypeptide is Glycerol-3-phosphate dehydrogenase [NAD(P)+] (Staphylococcus epidermidis (strain ATCC 35984 / DSM 28319 / BCRC 17069 / CCUG 31568 / BM 3577 / RP62A)).